We begin with the raw amino-acid sequence, 872 residues long: Probable cation-transporting P-type ATPase (872 aa).

Residues 1 to 41 (MNKWTGLSAAAVLESRAQHGANLIPTKKLTPFWLLFLEQFK) are Cytoplasmic-facing. Residues 42 to 62 (SLVVILLLVATILSLVVAIIS) form a helical membrane-spanning segment. Topologically, residues 63-79 (GVNANWLFDHNLVIEWT) are extracellular. The chain crosses the membrane as a helical span at residues 80–100 (QPFVILITVLANSLIGSIQEF). Residues 101 to 237 (KAQKSAHTLK…TKLSPLQQKL (137 aa)) lie on the Cytoplasmic side of the membrane. Residues 238-257 (EKVGKWFSWFGLGLFVVVFL) form a helical membrane-spanning segment. At 258–275 (VQLGLLGFHNFSANWSIA) the chain is on the extracellular side. Residues 276 to 293 (LIGAIALVVAIIPEGLVT) form a helical membrane-spanning segment. The Cytoplasmic portion of the chain corresponds to 294 to 642 (FINVIFALSV…EQGRKTFLTC (349 aa)). Aspartate 331 acts as the 4-aspartylphosphate intermediate in catalysis. Aspartate 587 and aspartate 591 together coordinate Mg(2+). The chain crosses the membrane as a helical span at residues 643-662 (KRVLFNLFLTSIAGTIVVLL). Residues 663–685 (GLFVLGEVFREQLSKANHNFQVF) are Extracellular-facing. A helical transmembrane segment spans residues 686-706 (TPTQLLIINLFVHGFPAVALA). Residues 707-724 (IQPVQEKLMLKPFSTKNL) are Cytoplasmic-facing. A helical membrane pass occupies residues 725–747 (FYNRGGFDLIWQSLLLSFLTLLF). At 748 to 768 (YSLGMVYAINDPELGKSGDLI) the chain is on the extracellular side. The helical transmembrane segment at 769 to 788 (NRAGATCGFMVLGGSAALNS) threads the bilayer. The Cytoplasmic portion of the chain corresponds to 789–801 (LNLMVDRPLVATN). Residues 802–824 (PKHYGIVWLGALSSIFVFLLIIF) traverse the membrane as a helical segment. Residues 825-842 (INPLGLVFSTLKDLTAHP) are Extracellular-facing. The helical transmembrane segment at 843–863 (VLIGYSFGGVLLYMTINEVVK) threads the bilayer. The Cytoplasmic portion of the chain corresponds to 864–872 (LIRLSYGSV).

It belongs to the cation transport ATPase (P-type) (TC 3.A.3) family. Type II subfamily.

Its subcellular location is the cell membrane. The enzyme catalyses ATP + H2O = ADP + phosphate + H(+). Its function is as follows. Could mediate calcium influx. The chain is Probable cation-transporting P-type ATPase (pacL) from Mycoplasma pneumoniae (strain ATCC 29342 / M129 / Subtype 1) (Mycoplasmoides pneumoniae).